A 334-amino-acid polypeptide reads, in one-letter code: Lipoyl synthase (334 aa).

[4Fe-4S] cluster contacts are provided by Cys-71, Cys-76, Cys-82, Cys-97, Cys-101, Cys-104, and Ser-312. The 219-residue stretch at 83 to 301 folds into the Radical SAM core domain; the sequence is WSHGTATFMV…RQEGLRRGFR (219 aa).

The protein belongs to the radical SAM superfamily. Lipoyl synthase family. [4Fe-4S] cluster is required as a cofactor.

It localises to the cytoplasm. The catalysed reaction is [[Fe-S] cluster scaffold protein carrying a second [4Fe-4S](2+) cluster] + N(6)-octanoyl-L-lysyl-[protein] + 2 oxidized [2Fe-2S]-[ferredoxin] + 2 S-adenosyl-L-methionine + 4 H(+) = [[Fe-S] cluster scaffold protein] + N(6)-[(R)-dihydrolipoyl]-L-lysyl-[protein] + 4 Fe(3+) + 2 hydrogen sulfide + 2 5'-deoxyadenosine + 2 L-methionine + 2 reduced [2Fe-2S]-[ferredoxin]. The protein operates within protein modification; protein lipoylation via endogenous pathway; protein N(6)-(lipoyl)lysine from octanoyl-[acyl-carrier-protein]: step 2/2. In terms of biological role, catalyzes the radical-mediated insertion of two sulfur atoms into the C-6 and C-8 positions of the octanoyl moiety bound to the lipoyl domains of lipoate-dependent enzymes, thereby converting the octanoylated domains into lipoylated derivatives. The protein is Lipoyl synthase of Halorhodospira halophila (strain DSM 244 / SL1) (Ectothiorhodospira halophila (strain DSM 244 / SL1)).